The following is a 457-amino-acid chain: tRNA-2-methylthio-N(6)-dimethylallyladenosine synthase (457 aa).

The MTTase N-terminal domain maps to 3–120; that stretch reads KKVYVKTFGC…LPQMIDARRA (118 aa). [4Fe-4S] cluster contacts are provided by C12, C49, C83, C157, C161, and C164. Residues 143–377 enclose the Radical SAM core domain; it reads RVEGPSAFVS…QATIEENVAR (235 aa). The TRAM domain maps to 380–447; the sequence is QSMVGKVERI…PHSLRGELLL (68 aa).

Belongs to the methylthiotransferase family. MiaB subfamily. As to quaternary structure, monomer. Requires [4Fe-4S] cluster as cofactor.

The protein resides in the cytoplasm. The catalysed reaction is N(6)-dimethylallyladenosine(37) in tRNA + (sulfur carrier)-SH + AH2 + 2 S-adenosyl-L-methionine = 2-methylsulfanyl-N(6)-dimethylallyladenosine(37) in tRNA + (sulfur carrier)-H + 5'-deoxyadenosine + L-methionine + A + S-adenosyl-L-homocysteine + 2 H(+). Functionally, catalyzes the methylthiolation of N6-(dimethylallyl)adenosine (i(6)A), leading to the formation of 2-methylthio-N6-(dimethylallyl)adenosine (ms(2)i(6)A) at position 37 in tRNAs that read codons beginning with uridine. In Burkholderia vietnamiensis (strain G4 / LMG 22486) (Burkholderia cepacia (strain R1808)), this protein is tRNA-2-methylthio-N(6)-dimethylallyladenosine synthase.